Here is a 196-residue protein sequence, read N- to C-terminus: Aliphatic amidase regulator (196 aa).

Residues 129-190 (MAKLKQKTEQ…PILKIAQELL (62 aa)) enclose the ANTAR domain.

In terms of assembly, forms a complex with AmiC.

Functionally, positive controlling element of AmiE, the gene for aliphatic amidase. Acts as a transcriptional antitermination factor. It is thought to allow RNA polymerase read through a rho-independent transcription terminator between the AmiE promoter and gene. In Pseudomonas aeruginosa (strain ATCC 15692 / DSM 22644 / CIP 104116 / JCM 14847 / LMG 12228 / 1C / PRS 101 / PAO1), this protein is Aliphatic amidase regulator (amiR).